Reading from the N-terminus, the 443-residue chain is Tryptophan synthase beta chain 2, chloroplastic (443 aa).

A disordered region spans residues 1 to 32 (PGPPPPAPEGRRRRGRGRNAAGQAVAAEASPA). Residues 1-45 (PGPPPPAPEGRRRRGRGRNAAGQAVAAEASPAAVEMGNGAAAPGL) constitute a chloroplast transit peptide. The span at 18–32 (RNAAGQAVAAEASPA) shows a compositional bias: low complexity. Lys138 carries the N6-(pyridoxal phosphate)lysine modification.

The protein belongs to the TrpB family. Tetramer of two alpha and two beta chains. Pyridoxal 5'-phosphate is required as a cofactor.

It is found in the plastid. Its subcellular location is the chloroplast. It carries out the reaction (1S,2R)-1-C-(indol-3-yl)glycerol 3-phosphate + L-serine = D-glyceraldehyde 3-phosphate + L-tryptophan + H2O. It functions in the pathway amino-acid biosynthesis; L-tryptophan biosynthesis; L-tryptophan from chorismate: step 5/5. Its function is as follows. The beta subunit is responsible for the synthesis of L-tryptophan from indole and L-serine. The chain is Tryptophan synthase beta chain 2, chloroplastic (TSB2) from Zea mays (Maize).